The chain runs to 485 residues: Adenosylhomocysteinase (485 aa).

Substrate contacts are provided by T64, D139, and E205. An NAD(+)-binding site is contributed by 206-208 (TTT). Residues K235 and D239 each coordinate substrate. NAD(+)-binding positions include N240, 269–274 (GYGDVG), E292, N327, and 348–350 (IGH).

This sequence belongs to the adenosylhomocysteinase family. Homotetramer. NAD(+) serves as cofactor.

The enzyme catalyses S-adenosyl-L-homocysteine + H2O = L-homocysteine + adenosine. Its pathway is amino-acid biosynthesis; L-homocysteine biosynthesis; L-homocysteine from S-adenosyl-L-homocysteine: step 1/1. Its function is as follows. Adenosylhomocysteine is a competitive inhibitor of S-adenosyl-L-methionine-dependent methyl transferase reactions; therefore adenosylhomocysteinase may play a key role in the control of methylations via regulation of the intracellular concentration of adenosylhomocysteine. The polypeptide is Adenosylhomocysteinase (SAHH) (Mesembryanthemum crystallinum (Common ice plant)).